Reading from the N-terminus, the 444-residue chain is S-locus-specific glycoprotein (444 aa).

The first 28 residues, 1–28 (MRGVIPNYHHSYTLFFFVILVLFPHVFS), serve as a signal peptide directing secretion. A Bulb-type lectin domain is found at 31-159 (TLSPNEALTI…KTNDLDRFMW (129 aa)). Asn-43, Asn-125, Asn-243, and Asn-396 each carry an N-linked (GlcNAc...) asparagine glycan. In terms of domain architecture, PAN spans 356-437 (CGEGDGFLRM…GGQDLYVKVA (82 aa)). Disulfide bonds link Cys-387–Cys-412 and Cys-395–Cys-397.

Stigma.

Its function is as follows. Involved in sporophytic self-incompatibility system (the inability of flowering plants to achieve self-fertilization). In Brassica oleracea var. alboglabra (Chinese kale), this protein is S-locus-specific glycoprotein (SLSG).